A 908-amino-acid polypeptide reads, in one-letter code: Chloride channel protein 2 (908 aa).

The Cytoplasmic segment spans residues 1–95 (MAAATAAAAA…RCHKFLVSRV (95 aa)). Positions 24 to 42 (QYEQTLMYGRYTQELGAFA) are essential for channel gating by both voltage and cell volume. T28 carries the post-translational modification Phosphothreonine. The tract at residues 44 to 57 (EEAARIRLGGPEPW) is modulates channel gating by both voltage and cell volume. Transmembrane regions (helical) follow at residues 96-129 (GEDW…AQQW) and 138-163 (ILLQ…TQIL). A Selectivity filter part_1 motif is present at residues 169–173 (GSGIP). S170 lines the chloride pocket. Positions 172–179 (IPEMKTIL) form an intramembrane region, helical. The next 2 helical transmembrane spans lie at 188-206 (LTLK…ALGS) and 213-231 (EGPF…SKFL). The short motif at 211–215 (GKEGP) is the Selectivity filter part_2 element. Intramembrane regions (helical) lie at residues 247-259 (MLAA…VGCC) and 263-271 (PIGGVLFSI). The next 5 membrane-spanning stretches (helical) occupy residues 283–303 (YWRG…LAVW), 329–357 (LPAF…VQVM), 366–385 (FLMR…ISTL), 437–457 (ANVF…SALA), and 465–488 (GAFM…MAAW). The short motif at 465–469 (GAFMP) is the Selectivity filter part_3 element. Residue F467 participates in chloride binding. Positions 505–519 (GGYAVVGAAALAGAV) form an intramembrane region, helical. The note=Loop between two helices intramembrane region spans 520–521 (TH). The segment at residues 522 to 533 (TVSTAVIVFELT) is an intramembrane region (helical). Positions 534 to 538 (GQIAH) form an intramembrane region, note=Loop between two helices. Residues 539–556 (ILPVMIAVILANAVAQSL) form a helical membrane-spanning segment. Residues 557–908 (QPSLYDSIIR…TPSDSDDKCQ (352 aa)) lie on the Cytoplasmic side of the membrane. Position 561 (Y561) interacts with chloride. The CBS 1 domain occupies 592-650 (MVRDVPHVALSCTFRDLRLALHRTKGRMLALVESPESMILLGSIERSQVVALLGAQLSP). Positions 653–662 (RRQHMQKLRK) are enriched in basic residues. The tract at residues 653-722 (RRQHMQKLRK…NSTSLQEGTT (70 aa)) is disordered. Low complexity predominate over residues 666–680 (SPPSDQESPPSSETS). Over residues 681-690 (IRFQVNTEDS) the composition is skewed to polar residues. The segment covering 698 to 707 (QTHKPLKPAL) has biased composition (basic residues). Positions 711–722 (PSNSTSLQEGTT) are enriched in polar residues. S768 is modified (phosphoserine). One can recognise a CBS 2 domain in the interval 800–860 (IDPAPFQLVE…GSVTAQGVKV (61 aa)). The Basolateral membrane sorting signature appears at 822–823 (LL). Residues 866–908 (SFRDSATSSSDTETTEVHALWGPRSRHGLPREGTPSDSDDKCQ) form a disordered region.

Belongs to the chloride channel (TC 2.A.49) family. ClC-2/CLCN2 subfamily. As to quaternary structure, homodimer. Interacts with auxiliary subunit HEPACAM. In terms of processing, phosphorylated. Activated by dephosphorylation. In terms of tissue distribution, expressed in the adrenal gland and brain. Expressed in intestinal epithelium (at protein level). Expressed in salivary gland (at protein level).

The protein resides in the cell membrane. Its subcellular location is the myelin membrane. It localises to the basolateral cell membrane. It is found in the cell projection. The protein localises to the dendritic spine membrane. The protein resides in the axon. It catalyses the reaction chloride(in) = chloride(out). The enzyme catalyses thiocyanate(in) = thiocyanate(out). It carries out the reaction bromide(in) = bromide(out). The catalysed reaction is nitrate(in) = nitrate(out). It catalyses the reaction iodide(out) = iodide(in). With respect to regulation, common gate kinetics are down-regulated by intracellular ATP. Inhibited by AK-42, a derivative of meclofenamate. Inhibited by Cd(2+). Inhibited by Zn(2+) and PKC activation. Inhibited at acidic pH. CCLN2:HEPACAM channel conductance is up-regulated upon hypo-osmolarity. Functionally, voltage-gated and osmosensitive chloride channel. Forms a homodimeric channel where each subunit has its own ion conduction pathway. Conducts double-barreled currents controlled by two types of gates, two fast glutamate gates that control each subunit independently and a slow common gate that opens and shuts off both subunits simultaneously. Displays inward rectification currents activated upon membrane hyperpolarization and extracellular hypotonicity. Contributes to chloride conductance involved in neuron excitability. In hippocampal neurons, generates a significant part of resting membrane conductance and provides an additional chloride efflux pathway to prevent chloride accumulation in dendrites upon GABA receptor activation. In glia, associates with the auxiliary subunit HEPACAM/GlialCAM at astrocytic processes and myelinated fiber tracts where it may regulate transcellular chloride flux buffering extracellular chloride and potassium concentrations. Regulates aldosterone production in adrenal glands. The opening of CLCN2 channels at hyperpolarized membrane potentials in the glomerulosa causes cell membrane depolarization, activation of voltage-gated calcium channels and increased expression of aldosterone synthase, the rate-limiting enzyme for aldosterone biosynthesis. Contributes to chloride conductance in retinal pigment epithelium involved in phagocytosis of shed photoreceptor outer segments and photoreceptor renewal. Conducts chloride currents at the basolateral membrane of epithelial cells with a role in chloride reabsorption rather than secretion. Permeable to small monovalent anions with chloride &gt; thiocyanate &gt; bromide &gt; nitrate &gt; iodide ion selectivity. The polypeptide is Chloride channel protein 2 (Clcn2) (Mus musculus (Mouse)).